Here is a 507-residue protein sequence, read N- to C-terminus: Trigger factor (507 aa).

One can recognise a PPIase FKBP-type domain in the interval 162 to 243 (GDFVSLDLSA…VRGVKEKELP (82 aa)). Residues 434–507 (NLPRRPSGEA…DSELPASETK (74 aa)) form a disordered region. Acidic residues predominate over residues 442–460 (EAEDDVRDISDELDAEELE). The span at 461–488 (VPAAAPSAEVTAAAGDEATATATATDAD) shows a compositional bias: low complexity.

The protein belongs to the FKBP-type PPIase family. Tig subfamily.

The protein resides in the cytoplasm. The enzyme catalyses [protein]-peptidylproline (omega=180) = [protein]-peptidylproline (omega=0). Its function is as follows. Involved in protein export. Acts as a chaperone by maintaining the newly synthesized protein in an open conformation. Functions as a peptidyl-prolyl cis-trans isomerase. The chain is Trigger factor from Parafrankia sp. (strain EAN1pec).